The chain runs to 77 residues: Acyl carrier protein (77 aa).

A Carrier domain is found at 3–77; it reads QEIFEKVKKI…GKAVEHIESK (75 aa). Position 38 is an O-(pantetheine 4'-phosphoryl)serine (serine 38).

The protein belongs to the acyl carrier protein (ACP) family. In terms of processing, 4'-phosphopantetheine is transferred from CoA to a specific serine of apo-ACP by AcpS. This modification is essential for activity because fatty acids are bound in thioester linkage to the sulfhydryl of the prosthetic group.

It localises to the cytoplasm. It participates in lipid metabolism; fatty acid biosynthesis. Carrier of the growing fatty acid chain in fatty acid biosynthesis. The sequence is that of Acyl carrier protein from Synechocystis sp. (strain ATCC 27184 / PCC 6803 / Kazusa).